The following is a 272-amino-acid chain: HTH-type transcriptional repressor AllR (272 aa).

The segment at 1–20 is disordered; the sequence is MTEVRRRGRPGQAEPTAQKG. An HTH iclR-type domain is found at 21-83; it reads AQALERGIAI…SQLGWWHIGL (63 aa). Residues 43 to 62 constitute a DNA-binding region (H-T-H motif); the sequence is VSDISGSLDLPLSTTFRLLK. The IclR-ED domain occupies 98–267; that stretch reads VLSVAGPFMH…AKDISTALGL (170 aa). Glyoxylate contacts are provided by residues 154-156, D207, C217, and 234-236; these read SGA and SIS.

Functionally, negative regulator of allantoin and glyoxylate utilization operons. Binds to the gcl promoter and to the allS-allA intergenic region. In Salmonella typhi, this protein is HTH-type transcriptional repressor AllR (allR).